The following is a 227-amino-acid chain: PKHD-type hydroxylase Bpro_3048 (227 aa).

Residues 78–179 enclose the Fe2OG dioxygenase domain; that stretch reads KIFTPRINRY…RLACFFWVES (102 aa). Residues histidine 97, aspartate 99, and histidine 160 each contribute to the Fe cation site. Residue arginine 170 coordinates 2-oxoglutarate.

It depends on Fe(2+) as a cofactor. L-ascorbate is required as a cofactor.

This Polaromonas sp. (strain JS666 / ATCC BAA-500) protein is PKHD-type hydroxylase Bpro_3048.